Here is a 248-residue protein sequence, read N- to C-terminus: Triosephosphate isomerase (248 aa).

Phosphothreonine is present on Thr-4. Substrate-binding residues include Asn-10 and Lys-12. Phosphoserine is present on Ser-71. Residue His-95 is the Electrophile of the active site. Catalysis depends on Glu-165, which acts as the Proton acceptor. The residue at position 215 (Ser-215) is a Phosphoserine. Lys-223 is covalently cross-linked (Glycyl lysine isopeptide (Lys-Gly) (interchain with G-Cter in ubiquitin)).

This sequence belongs to the triosephosphate isomerase family. Homodimer.

It catalyses the reaction D-glyceraldehyde 3-phosphate = dihydroxyacetone phosphate. It participates in carbohydrate biosynthesis; gluconeogenesis. Its pathway is carbohydrate degradation; glycolysis; D-glyceraldehyde 3-phosphate from glycerone phosphate: step 1/1. This chain is Triosephosphate isomerase (TPI1), found in Saccharomyces cerevisiae (strain ATCC 204508 / S288c) (Baker's yeast).